Reading from the N-terminus, the 239-residue chain is Adapter protein MecA (239 aa).

Basic and acidic residues predominate over residues 118–128; that stretch reads EQRTKEKEAQG. The disordered stretch occupies residues 118–137; that stretch reads EQRTKEKEAQGSKRQKSSAR.

The protein belongs to the MecA family. Homodimer.

Enables the recognition and targeting of unfolded and aggregated proteins to the ClpC protease or to other proteins involved in proteolysis. This Staphylococcus aureus (strain JH1) protein is Adapter protein MecA.